Here is a 458-residue protein sequence, read N- to C-terminus: tRNA modification GTPase MnmE (458 aa).

(6S)-5-formyl-5,6,7,8-tetrahydrofolate contacts are provided by Arg-26, Glu-88, and Arg-127. The region spanning 224–378 is the TrmE-type G domain; the sequence is GLSTAIIGRP…IEDRINQLFF (155 aa). Asn-234 contributes to the K(+) binding site. GTP-binding positions include 234-239, 253-259, and 278-281; these read NVGKSS, TDIAGTT, and DTAG. Mg(2+) is bound at residue Ser-238. Positions 253, 255, and 258 each coordinate K(+). Thr-259 contributes to the Mg(2+) binding site. Position 458 (Lys-458) interacts with (6S)-5-formyl-5,6,7,8-tetrahydrofolate.

Belongs to the TRAFAC class TrmE-Era-EngA-EngB-Septin-like GTPase superfamily. TrmE GTPase family. As to quaternary structure, homodimer. Heterotetramer of two MnmE and two MnmG subunits. Requires K(+) as cofactor.

It is found in the cytoplasm. In terms of biological role, exhibits a very high intrinsic GTPase hydrolysis rate. Involved in the addition of a carboxymethylaminomethyl (cmnm) group at the wobble position (U34) of certain tRNAs, forming tRNA-cmnm(5)s(2)U34. The sequence is that of tRNA modification GTPase MnmE from Streptococcus pyogenes serotype M6 (strain ATCC BAA-946 / MGAS10394).